The primary structure comprises 347 residues: Histidinol-phosphate aminotransferase (347 aa).

An N6-(pyridoxal phosphate)lysine modification is found at lysine 209.

It belongs to the class-II pyridoxal-phosphate-dependent aminotransferase family. Histidinol-phosphate aminotransferase subfamily. In terms of assembly, homodimer. Requires pyridoxal 5'-phosphate as cofactor.

It catalyses the reaction L-histidinol phosphate + 2-oxoglutarate = 3-(imidazol-4-yl)-2-oxopropyl phosphate + L-glutamate. The protein operates within amino-acid biosynthesis; L-histidine biosynthesis; L-histidine from 5-phospho-alpha-D-ribose 1-diphosphate: step 7/9. This Geotalea daltonii (strain DSM 22248 / JCM 15807 / FRC-32) (Geobacter daltonii) protein is Histidinol-phosphate aminotransferase.